The following is an 869-amino-acid chain: Bifunctional uridylyltransferase/uridylyl-removing enzyme (869 aa).

Residues 1 to 332 (MTATPADRPD…QFDGEAVPVQ (332 aa)) form a uridylyltransferase region. The interval 333–691 (LDAGFSLRRG…RRAVPDNDAL (359 aa)) is uridylyl-removing. An HD domain is found at 450-572 (VDQHTLMVLR…VGTRERLDYL (123 aa)). ACT domains lie at 692 to 771 (EVFV…PSRR) and 798 to 869 (RISL…LDPT).

Belongs to the GlnD family. The cofactor is Mg(2+).

The enzyme catalyses [protein-PII]-L-tyrosine + UTP = [protein-PII]-uridylyl-L-tyrosine + diphosphate. It carries out the reaction [protein-PII]-uridylyl-L-tyrosine + H2O = [protein-PII]-L-tyrosine + UMP + H(+). With respect to regulation, uridylyltransferase (UTase) activity is inhibited by glutamine, while glutamine activates uridylyl-removing (UR) activity. Its function is as follows. Modifies, by uridylylation and deuridylylation, the PII regulatory proteins (GlnB and homologs), in response to the nitrogen status of the cell that GlnD senses through the glutamine level. Under low glutamine levels, catalyzes the conversion of the PII proteins and UTP to PII-UMP and PPi, while under higher glutamine levels, GlnD hydrolyzes PII-UMP to PII and UMP (deuridylylation). Thus, controls uridylylation state and activity of the PII proteins, and plays an important role in the regulation of nitrogen assimilation and metabolism. The polypeptide is Bifunctional uridylyltransferase/uridylyl-removing enzyme (Xanthomonas campestris pv. campestris (strain B100)).